A 779-amino-acid chain; its full sequence is Catalase-peroxidase (779 aa).

A cross-link (tryptophyl-tyrosyl-methioninium (Trp-Tyr) (with M-296)) is located at residues 148-270 (WHSAGTYRIT…LGAVQMGLIY (123 aa)). The Proton acceptor role is filled by His149. The tryptophyl-tyrosyl-methioninium (Tyr-Met) (with W-148) cross-link spans 270-296 (YVNPEGPNGKPDPIAAAKDIRETFFRM). Residue His311 participates in heme b binding.

It belongs to the peroxidase family. Peroxidase/catalase subfamily. As to quaternary structure, homodimer or homotetramer. The cofactor is heme b. In terms of processing, formation of the three residue Trp-Tyr-Met cross-link is important for the catalase, but not the peroxidase activity of the enzyme.

It catalyses the reaction H2O2 + AH2 = A + 2 H2O. The catalysed reaction is 2 H2O2 = O2 + 2 H2O. Bifunctional enzyme with both catalase and broad-spectrum peroxidase activity. This chain is Catalase-peroxidase, found in Bradyrhizobium diazoefficiens (strain JCM 10833 / BCRC 13528 / IAM 13628 / NBRC 14792 / USDA 110).